Reading from the N-terminus, the 292-residue chain is 33 kDa chaperonin (292 aa).

2 cysteine pairs are disulfide-bonded: Cys230–Cys232 and Cys263–Cys266.

The protein belongs to the HSP33 family. Under oxidizing conditions two disulfide bonds are formed involving the reactive cysteines. Under reducing conditions zinc is bound to the reactive cysteines and the protein is inactive.

It localises to the cytoplasm. Redox regulated molecular chaperone. Protects both thermally unfolding and oxidatively damaged proteins from irreversible aggregation. Plays an important role in the bacterial defense system toward oxidative stress. This Salmonella paratyphi A (strain ATCC 9150 / SARB42) protein is 33 kDa chaperonin.